The primary structure comprises 460 residues: Gastric inhibitory polypeptide receptor (460 aa).

A signal peptide spans 1–18 (MPLRLLLLLLWLWGLQWA). The Extracellular portion of the chain corresponds to 19–134 (ETDSEGQTTT…DQTLILERLQ (116 aa)). Disulfide bonds link C42–C66, C57–C99, and C80–C114. 3 N-linked (GlcNAc...) asparagine glycosylation sites follow: N58, N68, and N73. A helical membrane pass occupies residues 135-155 (IMYTVGYSLSLTTLLLALLIL). Topologically, residues 156–166 (SLFRRLHCTRN) are cytoplasmic. Residues 167–185 (YIHMNLFTSFMLRAAAILT) traverse the membrane as a helical segment. The Extracellular portion of the chain corresponds to 186-222 (RDQLLPPLGPYTGDQAPTPWNQALAACRTAQIMTQYC). Residues 223–243 (VGANYTWLLVEGVYLHHLLVI) form a helical membrane-spanning segment. At 244 to 255 (VGRSEKGHFRCY) the chain is on the cytoplasmic side. A helical transmembrane segment spans residues 256–276 (LLLGWGAPALFVIPWVIVRYL). At 277 to 297 (RENTQCWERNEVKAIWWIIRT) the chain is on the extracellular side. The chain crosses the membrane as a helical span at residues 298 to 318 (PILITILINFLIFIRILGILV). The Cytoplasmic portion of the chain corresponds to 319–337 (SKLRTRQMRCPDYRLRLAR). A helical membrane pass occupies residues 338 to 358 (STLTLVPLLGVHEVVFAPVTE). Residues 359-370 (EQVEGSLRFAKL) lie on the Extracellular side of the membrane. Residues 371-391 (AFEIFLSSFQGFLVSVLYCFI) traverse the membrane as a helical segment. Topologically, residues 392-460 (NKEVQSEIRQ…PGDEVLESYC (69 aa)) are cytoplasmic.

It belongs to the G-protein coupled receptor 2 family. In terms of assembly, may form homodimers and heterodimers with GLP1R. N-glycosylation is required for cell surface expression and lengthens receptor half-life by preventing degradation in the ER.

Its subcellular location is the cell membrane. Functionally, this is a receptor for GIP. The activity of this receptor is mediated by G proteins which activate adenylyl cyclase. This Mus musculus (Mouse) protein is Gastric inhibitory polypeptide receptor (Gipr).